The sequence spans 489 residues: Aspartyl/glutamyl-tRNA(Asn/Gln) amidotransferase subunit B (489 aa).

It belongs to the GatB/GatE family. GatB subfamily. In terms of assembly, heterotrimer of A, B and C subunits.

It catalyses the reaction L-glutamyl-tRNA(Gln) + L-glutamine + ATP + H2O = L-glutaminyl-tRNA(Gln) + L-glutamate + ADP + phosphate + H(+). The enzyme catalyses L-aspartyl-tRNA(Asn) + L-glutamine + ATP + H2O = L-asparaginyl-tRNA(Asn) + L-glutamate + ADP + phosphate + 2 H(+). Allows the formation of correctly charged Asn-tRNA(Asn) or Gln-tRNA(Gln) through the transamidation of misacylated Asp-tRNA(Asn) or Glu-tRNA(Gln) in organisms which lack either or both of asparaginyl-tRNA or glutaminyl-tRNA synthetases. The reaction takes place in the presence of glutamine and ATP through an activated phospho-Asp-tRNA(Asn) or phospho-Glu-tRNA(Gln). The chain is Aspartyl/glutamyl-tRNA(Asn/Gln) amidotransferase subunit B from Polynucleobacter asymbioticus (strain DSM 18221 / CIP 109841 / QLW-P1DMWA-1) (Polynucleobacter necessarius subsp. asymbioticus).